The primary structure comprises 354 residues: Uroporphyrinogen decarboxylase (354 aa).

Residues 30 to 34 (RQAGR), Asp-79, Tyr-154, Ser-209, and His-333 contribute to the substrate site.

Belongs to the uroporphyrinogen decarboxylase family. Homodimer.

The protein localises to the cytoplasm. The enzyme catalyses uroporphyrinogen III + 4 H(+) = coproporphyrinogen III + 4 CO2. The protein operates within porphyrin-containing compound metabolism; protoporphyrin-IX biosynthesis; coproporphyrinogen-III from 5-aminolevulinate: step 4/4. In terms of biological role, catalyzes the decarboxylation of four acetate groups of uroporphyrinogen-III to yield coproporphyrinogen-III. The protein is Uroporphyrinogen decarboxylase of Mycolicibacterium gilvum (strain PYR-GCK) (Mycobacterium gilvum (strain PYR-GCK)).